The sequence spans 334 residues: Protein-methionine-sulfoxide reductase catalytic subunit MsrP (334 aa).

A signal peptide (tat-type signal) is located at residues 1-44 (MKKIRPLTEADVTAESAFFMQRRQVLKALGISAAALSLPSTAQA). Mo-molybdopterin contacts are provided by residues N88, 91-92 (YE), C146, T181, N233, R238, and 249-251 (GIK).

It belongs to the MsrP family. As to quaternary structure, heterodimer of a catalytic subunit (MsrP) and a heme-binding subunit (MsrQ). Mo-molybdopterin is required as a cofactor. Predicted to be exported by the Tat system. The position of the signal peptide cleavage has not been experimentally proven.

It is found in the periplasm. It carries out the reaction L-methionyl-[protein] + a quinone + H2O = L-methionyl-(S)-S-oxide-[protein] + a quinol. It catalyses the reaction L-methionyl-[protein] + a quinone + H2O = L-methionyl-(R)-S-oxide-[protein] + a quinol. Its function is as follows. Part of the MsrPQ system that repairs oxidized periplasmic proteins containing methionine sulfoxide residues (Met-O), using respiratory chain electrons. Thus protects these proteins from oxidative-stress damage caused by reactive species of oxygen and chlorine generated by the host defense mechanisms. MsrPQ is essential for the maintenance of envelope integrity under bleach stress, rescuing a wide series of structurally unrelated periplasmic proteins from methionine oxidation, including the primary periplasmic chaperone SurA and the lipoprotein Pal. The catalytic subunit MsrP is non-stereospecific, being able to reduce both (R-) and (S-) diastereoisomers of methionine sulfoxide. The polypeptide is Protein-methionine-sulfoxide reductase catalytic subunit MsrP (Salmonella dublin (strain CT_02021853)).